Here is a 220-residue protein sequence, read N- to C-terminus: PKHD-type hydroxylase PCC7424_1929 (220 aa).

The region spanning 77-173 is the Fe2OG dioxygenase domain; it reads KIHSLLFSRY…RLVAVGWVQS (97 aa). Fe cation contacts are provided by His95, Asp97, and His154. Arg164 is a binding site for 2-oxoglutarate.

The cofactor is Fe(2+). L-ascorbate is required as a cofactor.

The protein is PKHD-type hydroxylase PCC7424_1929 of Gloeothece citriformis (strain PCC 7424) (Cyanothece sp. (strain PCC 7424)).